Reading from the N-terminus, the 261-residue chain is [LysW]-aminoadipate/[LysW]-glutamate kinase (261 aa).

Residues 35-36 (GG), Arg62, and Asn166 contribute to the substrate site.

It belongs to the acetylglutamate kinase family. LysZ subfamily.

The protein resides in the cytoplasm. It catalyses the reaction [amino-group carrier protein]-C-terminal-N-(1,4-dicarboxybutan-1-yl)-L-glutamine + ATP = [amino-group carrier protein]-C-terminal-N-(1-carboxy-5-phosphooxy-5-oxopentan-1-yl)-L-glutamine + ADP. The catalysed reaction is [amino-group carrier protein]-C-terminal-gamma-(L-glutamyl)-L-glutamate + ATP = [amino-group carrier protein]-C-terminal-gamma-(5-phospho-L-glutamyl)-L-glutamate + ADP. It functions in the pathway amino-acid biosynthesis; L-lysine biosynthesis via AAA pathway; L-lysine from L-alpha-aminoadipate (Thermus route): step 2/5. It participates in amino-acid biosynthesis; L-arginine biosynthesis. Involved in both the arginine and lysine biosynthetic pathways. Phosphorylates the LysW-bound precursors glutamate (for arginine biosynthesis), respectively alpha-aminoadipate (for lysine biosynthesis). This chain is [LysW]-aminoadipate/[LysW]-glutamate kinase, found in Sulfurisphaera tokodaii (strain DSM 16993 / JCM 10545 / NBRC 100140 / 7) (Sulfolobus tokodaii).